Reading from the N-terminus, the 223-residue chain is Pre-protein VI (223 aa).

A propeptide spanning residues 1 to 27 (MAYSRLAPHCGLPVYGHHIGNSEMSGG) is cleaved from the precursor. An amphipathic alpha-helix essential for membrane lytic activity region spans residues 28–51 (FSWSSLGSSLSSGLSRIGSFLGST). Residues 29-50 (SWSSLGSSLSSGLSRIGSFLGS) form an involved in endosomal membrane lysis region. Interaction with hexon protein stretches follow at residues 45–71 (GSFL…FLKS) and 206–212 (LEDMLGD). 2 short sequence motifs (nuclear export signal) span residues 64–73 (AKEGFLKSGV) and 204–215 (SALEDMLGDGVC). The binds to importin alpha/beta, involved in hexon nuclear import stretch occupies residues 213-223 (GVCYRSKRYCY).

It belongs to the adenoviridae protein VI family. In terms of assembly, interacts with hexon protein; this interaction allows nuclear import of hexon trimers and possibly pre-capsid assembly. Interacts (via C-terminal NLS) with importin alpha/beta. As to quaternary structure, interacts (via PPxY motif) with host NEDD4 ubiquitine ligase; this interaction might play a role in virus intracellular transport during entry. Part of a complex composed of the core-capsid bridging protein, the endosome lysis protein VI and the hexon-linking protein VIII; these interactions bridge the virus core to the capsid. Interacts with peripentonal hexons; this interaction stabilizes the capsid by gluing two peripentonal hexons together and joining them with an adjacent group-of-nine hexon. Heterodimer with the viral protease; disulfide-linked. Interacts with the viral protease. In terms of processing, ubiquitinated by Nedd4 following partial capsid disassembly; which might play a role in intracellular virus movement during entry. Contains the major nuclear import and export signals. Proteolytically removed during virion maturation. The processing of the C-terminus turns the precursor into a mature viral structural protein and abrogates its ability to promote hexon import and act as a potential chaperone protein.

It is found in the host nucleus. The protein resides in the host cytoplasm. Its subcellular location is the virion. During virus assembly, promotes hexon trimers nuclear import through nuclear pore complexes via an importin alpha/beta-dependent mechanism. By analogy to herpesviruses capsid assembly, might act as a chaperone to promote the formation of the icosahedral capsid. Functionally, structural component of the virion that provides increased stability to the particle shell through its interaction with the core-capsid bridging protein and the hexon-linking protein VIII. Fibers shedding during virus entry into host cell allows the endosome lysis protein to be exposed as a membrane-lytic peptide. Exhibits pH-independent membrane fragmentation activity and probably mediates viral rapid escape from host endosome via organellar membrane lysis. It is not clear if it then remains partially associated with the capsid and involved in the intracellular microtubule-dependent transport of capsid to the nucleus, or if it is lost during endosomal penetration. In terms of biological role, cofactor that activates the viral protease. Binds to viral protease in a 1:1 ratio. This chain is Pre-protein VI, found in Pantherophis guttatus (Corn snake).